The primary structure comprises 243 residues: 3-deoxy-manno-octulosonate cytidylyltransferase (243 aa).

It belongs to the KdsB family.

It localises to the cytoplasm. It carries out the reaction 3-deoxy-alpha-D-manno-oct-2-ulosonate + CTP = CMP-3-deoxy-beta-D-manno-octulosonate + diphosphate. It participates in nucleotide-sugar biosynthesis; CMP-3-deoxy-D-manno-octulosonate biosynthesis; CMP-3-deoxy-D-manno-octulosonate from 3-deoxy-D-manno-octulosonate and CTP: step 1/1. The protein operates within bacterial outer membrane biogenesis; lipopolysaccharide biosynthesis. Its function is as follows. Activates KDO (a required 8-carbon sugar) for incorporation into bacterial lipopolysaccharide in Gram-negative bacteria. This is 3-deoxy-manno-octulosonate cytidylyltransferase from Helicobacter pylori (strain ATCC 700392 / 26695) (Campylobacter pylori).